The sequence spans 478 residues: Putative response regulator NtrX-like (478 aa).

One can recognise a Response regulatory domain in the interval 5-121 (DVLIVDDEED…KLVILLKRAC (117 aa)). At Asp54 the chain carries 4-aspartylphosphate. In terms of domain architecture, Sigma-54 factor interaction spans 143-372 (LVGNSTITLK…LRNVVEWTLI (230 aa)). Residues 171 to 178 (GKVGSGKE) and 235 to 244 (ANNGTLYIDE) each bind ATP.

Member of the two-component regulatory system RBE_0312/RBE_0470. In Rickettsia bellii (strain RML369-C), this protein is Putative response regulator NtrX-like.